The following is a 147-amino-acid chain: UPF0306 protein YhbP (147 aa).

This sequence belongs to the UPF0306 family.

In Salmonella paratyphi A (strain AKU_12601), this protein is UPF0306 protein YhbP.